Consider the following 686-residue polypeptide: Translation initiation factor IF-2 (686 aa).

The segment at 61 to 98 is disordered; sequence FEVEEKVVRSKKNSNKKKKKGKGNEDKRQENFAGRQQT. A compositionally biased stretch (basic residues) spans 69–81; it reads RSKKNSNKKKKKG. A tr-type G domain is found at 188-357; that stretch reads ERPAVVTIMG…LLVSEVEEYK (170 aa). The interval 197–204 is G1; sequence GHVDHGKT. 197–204 is a binding site for GTP; it reads GHVDHGKT. The tract at residues 222–226 is G2; that stretch reads GITQH. Positions 243-246 are G3; that stretch reads DTPG. Residues 243 to 247 and 297 to 300 contribute to the GTP site; these read DTPGH and NKMD. A G4 region spans residues 297 to 300; that stretch reads NKMD. A G5 region spans residues 333-335; the sequence is SAI.

Belongs to the TRAFAC class translation factor GTPase superfamily. Classic translation factor GTPase family. IF-2 subfamily.

The protein resides in the cytoplasm. Its function is as follows. One of the essential components for the initiation of protein synthesis. Protects formylmethionyl-tRNA from spontaneous hydrolysis and promotes its binding to the 30S ribosomal subunits. Also involved in the hydrolysis of GTP during the formation of the 70S ribosomal complex. The chain is Translation initiation factor IF-2 from Bacillus cereus (strain B4264).